The following is a 68-amino-acid chain: Tabimmunregulin 12 (68 aa).

Residues 1-24 (MLFKSYVYFLAGLLLVGLFTSCDA) form the signal peptide. A propeptide spanning residues 25–38 (DAQYEELVPGFFRK) is cleaved from the precursor.

As to expression, expressed in salivary glands.

The protein localises to the secreted. In terms of biological role, horsefly salivary gland immunosuppressant protein that likely inhibits the host inflammatory response by regulation of anti- and pro-inflammatory cytokines. When tested on mouse splenocytes in the presence of LPS, it increases the secretion of the proinflammatory cytokine interleukin-10 (IL10) and decreases the secretion of the proinflammatory cytokine interferon-gamma (IFNG) in a dose-dependent manner. The sequence is that of Tabimmunregulin 12 from Tabanus yao (Horsefly).